Here is a 113-residue protein sequence, read N- to C-terminus: Cell cycle protein GpsB (113 aa).

Residues 37 to 63 (KDYETYATLVKSLRQEIADLKEELTRK) are a coiled coil. A disordered region spans residues 61–82 (TRKPQVSSAPSPSHPDPIDVAA).

It belongs to the GpsB family. Forms polymers through the coiled coil domains. Interacts with PBP1, MreC and EzrA.

The protein resides in the cytoplasm. Its function is as follows. Divisome component that associates with the complex late in its assembly, after the Z-ring is formed, and is dependent on DivIC and PBP2B for its recruitment to the divisome. Together with EzrA, is a key component of the system that regulates PBP1 localization during cell cycle progression. Its main role could be the removal of PBP1 from the cell pole after pole maturation is completed. Also contributes to the recruitment of PBP1 to the division complex. Not essential for septum formation. This is Cell cycle protein GpsB from Streptococcus pneumoniae (strain ATCC 700669 / Spain 23F-1).